Consider the following 177-residue polypeptide: Large ribosomal subunit protein uL6 (177 aa).

This sequence belongs to the universal ribosomal protein uL6 family. As to quaternary structure, part of the 50S ribosomal subunit.

Its function is as follows. This protein binds to the 23S rRNA, and is important in its secondary structure. It is located near the subunit interface in the base of the L7/L12 stalk, and near the tRNA binding site of the peptidyltransferase center. This Vibrio campbellii (strain ATCC BAA-1116) protein is Large ribosomal subunit protein uL6.